The sequence spans 289 residues: MEEPSGAQLLGPVEIRALAEKLDVTPTKKLGQNFVHDPNTVRRIVTAADLTPEDHVVEVGPGLGSLTLALVEKAASVTAVEIDPRLAAELPATFAWRAPGLADKLTVVQKDALKVQQSDFTTQPTALVANLPYNVSVPVLLHMLAEFPSITKVLVMVQLEVADRLAAVPGSKIYGVPSVKASFYGEVSKAGTIGKHVFWPAPQIESGLVKIIRTHTPWPQDDATRAKVWPVIDAAFLQRRKTLRAALSGHFGSASAAEEALRAADIDPQLRGERLDVADYVRLAGVIGS.

Residues Asn33, Val35, Gly60, Glu81, Asp111, and Asn130 each coordinate S-adenosyl-L-methionine.

Belongs to the class I-like SAM-binding methyltransferase superfamily. rRNA adenine N(6)-methyltransferase family. RsmA subfamily.

The protein localises to the cytoplasm. It carries out the reaction adenosine(1518)/adenosine(1519) in 16S rRNA + 4 S-adenosyl-L-methionine = N(6)-dimethyladenosine(1518)/N(6)-dimethyladenosine(1519) in 16S rRNA + 4 S-adenosyl-L-homocysteine + 4 H(+). In terms of biological role, specifically dimethylates two adjacent adenosines (A1518 and A1519) in the loop of a conserved hairpin near the 3'-end of 16S rRNA in the 30S particle. May play a critical role in biogenesis of 30S subunits. The polypeptide is Ribosomal RNA small subunit methyltransferase A (Corynebacterium efficiens (strain DSM 44549 / YS-314 / AJ 12310 / JCM 11189 / NBRC 100395)).